Reading from the N-terminus, the 229-residue chain is CMRF35-like molecule 6 (229 aa).

The signal sequence occupies residues 1-21 (MNPRVIRLWLPSAVLLSLVPG). An Ig-like V-type domain is found at 22–126 (HFPVRGPSTV…FYDAYLQIDK (105 aa)). Topologically, residues 22 to 188 (HFPVRGPSTV…ELRSLLSSPH (167 aa)) are extracellular. Cysteine 43 and cysteine 110 form a disulfide bridge. N-linked (GlcNAc...) asparagine glycosylation is found at asparagine 90 and asparagine 99. The helical transmembrane segment at 189–209 (FWILVSLKLPLFLSMLGALLW) threads the bilayer. Residues 210–229 (VNRPQRCSGGSSAWPCYENQ) lie on the Cytoplasmic side of the membrane.

The protein belongs to the CD300 family.

Its subcellular location is the cell membrane. This Mus musculus (Mouse) protein is CMRF35-like molecule 6 (Cd300c).